The chain runs to 451 residues: Phosphoglucosamine mutase (451 aa).

Ser107 acts as the Phosphoserine intermediate in catalysis. Ser107, Asp246, Asp248, and Asp250 together coordinate Mg(2+). The residue at position 107 (Ser107) is a Phosphoserine.

This sequence belongs to the phosphohexose mutase family. It depends on Mg(2+) as a cofactor. In terms of processing, activated by phosphorylation.

The catalysed reaction is alpha-D-glucosamine 1-phosphate = D-glucosamine 6-phosphate. In terms of biological role, catalyzes the conversion of glucosamine-6-phosphate to glucosamine-1-phosphate. This chain is Phosphoglucosamine mutase, found in Burkholderia lata (strain ATCC 17760 / DSM 23089 / LMG 22485 / NCIMB 9086 / R18194 / 383).